We begin with the raw amino-acid sequence, 347 residues long: tRNA pseudouridine synthase D (347 aa).

D81 serves as the catalytic Nucleophile. One can recognise a TRUD domain in the interval 158-305 (GVPNYFGSQR…RHDRRDIALK (148 aa)).

Belongs to the pseudouridine synthase TruD family.

It catalyses the reaction uridine(13) in tRNA = pseudouridine(13) in tRNA. Functionally, responsible for synthesis of pseudouridine from uracil-13 in transfer RNAs. In Vibrio campbellii (strain ATCC BAA-1116), this protein is tRNA pseudouridine synthase D.